A 326-amino-acid polypeptide reads, in one-letter code: N-acetyl-gamma-glutamyl-phosphate reductase (326 aa).

Residue C155 is part of the active site.

This sequence belongs to the NAGSA dehydrogenase family. Type 1 subfamily.

The protein localises to the cytoplasm. It carries out the reaction N-acetyl-L-glutamate 5-semialdehyde + phosphate + NADP(+) = N-acetyl-L-glutamyl 5-phosphate + NADPH + H(+). The protein operates within amino-acid biosynthesis; L-arginine biosynthesis; N(2)-acetyl-L-ornithine from L-glutamate: step 3/4. Its function is as follows. Catalyzes the NADPH-dependent reduction of N-acetyl-5-glutamyl phosphate to yield N-acetyl-L-glutamate 5-semialdehyde. This Shewanella oneidensis (strain ATCC 700550 / JCM 31522 / CIP 106686 / LMG 19005 / NCIMB 14063 / MR-1) protein is N-acetyl-gamma-glutamyl-phosphate reductase.